The following is a 176-amino-acid chain: MQNAKLMLTCLAFAGLAALAGCSFPGVYKIDIQQGNVVTQDMIDQLRPGMTRRQVRFIMGNPLIVDTFHANRWDYLYSIQPGGGRRQQERVSLFFNDSDQLAGLNGDFMPGVSRDEAILGKEGSTTVTQPADQQKPEAQKEEPPKPGSTLEQLQREVDEAQPVPVPTPEPLDPSPQ.

An N-terminal signal peptide occupies residues 1–21 (MQNAKLMLTCLAFAGLAALAG). Cysteine 22 carries N-palmitoyl cysteine lipidation. Residue cysteine 22 is the site of S-diacylglycerol cysteine attachment. Residues 121–176 (KEGSTTVTQPADQQKPEAQKEEPPKPGSTLEQLQREVDEAQPVPVPTPEPLDPSPQ) form a disordered region. Residues 123-132 (GSTTVTQPAD) show a composition bias toward polar residues. Over residues 134–144 (QKPEAQKEEPP) the composition is skewed to basic and acidic residues. Positions 163 to 176 (VPVPTPEPLDPSPQ) are enriched in pro residues.

This sequence belongs to the BamE family. As to quaternary structure, part of the Bam complex.

It localises to the cell outer membrane. In terms of biological role, part of the outer membrane protein assembly complex, which is involved in assembly and insertion of beta-barrel proteins into the outer membrane. May have a structural role in maintaining the cell envelope integrity. The chain is Outer membrane protein assembly factor BamE from Pseudomonas aeruginosa (strain ATCC 15692 / DSM 22644 / CIP 104116 / JCM 14847 / LMG 12228 / 1C / PRS 101 / PAO1).